Consider the following 417-residue polypeptide: MKYKVLTLCLSAALFAPIAPTMASTDNQADMVLDQVLVLSRHNLRTPIVNTGILTEVTDKKWPDWDAKSGYLTTQGGALEVYMGHYFREWIDQNKLLADELCPTSNEDIYLYTNSLQRTIATAQFFAAGAFPGCKVNIHHQPEIGKMDPVFNPIITNGSPEFKQKALAAMDDYLKGLSLKAGYEELDTVLNIKDSQKCKTDKLCNLDSQKNSFIIEADKEPGVSGPLKIANSAVDAIDLQYYEGFPADQVAWGLVDTPEKWKKLNTLKNAYQETLFTPKIIAKNVAHPILNYIDKGFVSVDKGETAKFIFLVGHDSNIASLMSAMDFKPYQLAQQYEHTPIGGKLVFQRWTDKQTKKDFMKVEYVYQTADQLRDNAYLSLETPPKHVTLELKDCPVDKNGYCSWEDFQKVMAKALEQ.

The first 23 residues, 1–23, serve as a signal peptide directing secretion; that stretch reads MKYKVLTLCLSAALFAPIAPTMA. A substrate-binding site is contributed by Arg-41. Residue His-42 is the Nucleophile of the active site. Residues Arg-45, Arg-118, and Glu-220 each coordinate substrate. Catalysis depends on Asp-315, which acts as the Proton donor.

This sequence belongs to the histidine acid phosphatase family. In terms of assembly, homodimer.

It is found in the periplasm. It catalyses the reaction alpha-D-glucose 1-phosphate + H2O = D-glucose + phosphate. The protein is Glucose-1-phosphatase (agp) of Providencia rettgeri.